The primary structure comprises 377 residues: Homoserine O-acetyltransferase (377 aa).

The region spanning 48–347 (NVVLIEHALT…PVGHDAFLTE (300 aa)) is the AB hydrolase-1 domain. The active-site Nucleophile is S143. Residue R213 coordinates substrate. Residues D311 and H341 contribute to the active site. D342 contacts substrate.

Belongs to the AB hydrolase superfamily. MetX family. In terms of assembly, homodimer.

It localises to the cytoplasm. It catalyses the reaction L-homoserine + acetyl-CoA = O-acetyl-L-homoserine + CoA. The protein operates within amino-acid biosynthesis; L-methionine biosynthesis via de novo pathway; O-acetyl-L-homoserine from L-homoserine: step 1/1. Its function is as follows. Transfers an acetyl group from acetyl-CoA to L-homoserine, forming acetyl-L-homoserine. The polypeptide is Homoserine O-acetyltransferase (Corynebacterium efficiens (strain DSM 44549 / YS-314 / AJ 12310 / JCM 11189 / NBRC 100395)).